The sequence spans 112 residues: Large ribosomal subunit protein uL18 (112 aa).

Belongs to the universal ribosomal protein uL18 family. As to quaternary structure, part of the 50S ribosomal subunit; part of the 5S rRNA/L5/L18/L25 subcomplex. Contacts the 5S and 23S rRNAs.

Its function is as follows. This is one of the proteins that bind and probably mediate the attachment of the 5S RNA into the large ribosomal subunit, where it forms part of the central protuberance. The polypeptide is Large ribosomal subunit protein uL18 (Thermus thermophilus (strain ATCC BAA-163 / DSM 7039 / HB27)).